We begin with the raw amino-acid sequence, 634 residues long: Acetylcholinesterase (634 aa).

A signal peptide spans 1–23 (MKTSDILLLPTVLLTFLFHNCFA). A disulfide bond links cysteine 91 and cysteine 118. N-linked (GlcNAc...) asparagine glycans are attached at residues asparagine 133 and asparagine 184. The active-site Acyl-ester intermediate is the serine 225. The cysteines at positions 279 and 290 are disulfide-linked. The N-linked (GlcNAc...) asparagine glycan is linked to asparagine 283. The active-site Charge relay system is glutamate 352. Asparagine 368 carries N-linked (GlcNAc...) asparagine glycosylation. A disulfide bridge links cysteine 427 with cysteine 580. Catalysis depends on histidine 495, which acts as the Charge relay system. Residues asparagine 512 and asparagine 592 are each glycosylated (N-linked (GlcNAc...) asparagine).

This sequence belongs to the type-B carboxylesterase/lipase family. Dimers and collagen-tailed forms, in which catalytic tetramers are associated with anchoring proteins that attach them to the basal lamina or to cell membranes. In the collagen-tailed forms, subunits are associated with a specific collagen, COLQ, which triggers the formation of isoform T tetramers from dimers.

It localises to the synapse. Its subcellular location is the secreted. The protein localises to the cell membrane. The enzyme catalyses acetylcholine + H2O = choline + acetate + H(+). Terminates signal transduction at the neuromuscular junction by rapid hydrolysis of the acetylcholine released into the synaptic cleft. The chain is Acetylcholinesterase (ache) from Danio rerio (Zebrafish).